A 551-amino-acid chain; its full sequence is RCC1 and BTB domain-containing protein 2 (551 aa).

RCC1 repeat units lie at residues Asn-64–Thr-115, Asp-117–Ser-169, Gly-171–Asp-222, Thr-223–Asp-274, Gly-276–Ser-326, and Gly-328–Glu-382. The BTB domain maps to Ala-394–Pro-457.

It localises to the cytoplasmic vesicle. The protein localises to the secretory vesicle. Its subcellular location is the acrosome. This is RCC1 and BTB domain-containing protein 2 (Rcbtb2) from Rattus norvegicus (Rat).